The primary structure comprises 144 residues: Large ribosomal subunit protein uL11 (144 aa).

Belongs to the universal ribosomal protein uL11 family. In terms of assembly, part of the ribosomal stalk of the 50S ribosomal subunit. Interacts with L10 and the large rRNA to form the base of the stalk. L10 forms an elongated spine to which L12 dimers bind in a sequential fashion forming a multimeric L10(L12)X complex. One or more lysine residues are methylated.

Functionally, forms part of the ribosomal stalk which helps the ribosome interact with GTP-bound translation factors. In Gluconobacter oxydans (strain 621H) (Gluconobacter suboxydans), this protein is Large ribosomal subunit protein uL11.